A 72-amino-acid chain; its full sequence is Large ribosomal subunit protein bL28 (72 aa).

Belongs to the bacterial ribosomal protein bL28 family.

This chain is Large ribosomal subunit protein bL28, found in Chlorobium chlorochromatii (strain CaD3).